The following is a 43-amino-acid chain: Protein PsbN (43 aa).

Residues 5-27 (NLVAIFVSCLLVSLTGYALYTSF) traverse the membrane as a helical segment.

It belongs to the PsbN family.

Its subcellular location is the plastid. It is found in the chloroplast thylakoid membrane. In terms of biological role, may play a role in photosystem I and II biogenesis. The protein is Protein PsbN of Ephedra sinica (Chinese ephedra).